The primary structure comprises 100 residues: Small ribosomal subunit protein bS6 (100 aa).

The protein belongs to the bacterial ribosomal protein bS6 family.

Its function is as follows. Binds together with bS18 to 16S ribosomal RNA. This Tropheryma whipplei (strain Twist) (Whipple's bacillus) protein is Small ribosomal subunit protein bS6.